The chain runs to 777 residues: Reticulon-1 (777 aa).

Disordered stretches follow at residues 1–77, 129–182, 198–245, and 293–573; these read MAAP…ETAS, NGHI…ILAD, TRPQ…PVEG, and ATHE…IPGP. 2 positions are modified to phosphoserine: Ser-13 and Ser-68. The segment covering 199–233 has biased composition (basic and acidic residues); sequence RPQEAKGQEEQSPGLEDKDLDFKDKDSEVSTKPEG. 3 positions are modified to phosphoserine: Ser-210, Ser-241, and Ser-325. The segment covering 326 to 339 has biased composition (low complexity); the sequence is PGSVTPPSSGTEPS. Phosphoserine occurs at positions 348 and 350. Residues 393-406 show a composition bias toward polar residues; sequence IPSSLDQEASSAES. Ser-485 is subject to Phosphoserine. A compositionally biased stretch (basic and acidic residues) spans 495-510; that stretch reads AIREETSSRATEERAP. A compositionally biased stretch (polar residues) spans 525–534; that stretch reads TPVTLQSRPE. Residues 590–777 form the Reticulon domain; that stretch reads AIDLLYWRDI…KIPGAKRHAE (188 aa). Helical transmembrane passes span 604-624 and 706-726; these read IVFG…VVSV and FAVL…LTLL.

In terms of assembly, interacts with NDRG1. Interacts with BACE1. Interacts with TMEM33. As to quaternary structure, interacts with UGCG; regulates the ceramide glucosyltransferase activity of UGCG. In terms of tissue distribution, expressed predominantly in central and peripheral nervous system of newborn and adult rats. Low levels have been also detected in heart, adrenal gland and spleen. Expression of isoform RTN1-B is restricted to particular neuronal types.

It localises to the endoplasmic reticulum membrane. It is found in the golgi apparatus membrane. In terms of biological role, inhibits amyloid precursor protein processing, probably by blocking BACE1 activity. The polypeptide is Reticulon-1 (Rtn1) (Rattus norvegicus (Rat)).